A 167-amino-acid chain; its full sequence is Centrin-3 (167 aa).

EF-hand domains follow at residues 25 to 60 (EQKQ…LGFD), 61 to 96 (VKKA…WILE), 98 to 133 (DPHE…LGEN), and 134 to 167 (MSDE…TGDI). Ca(2+) is bound by residues Asp-38, Asp-40, Asp-42, and Glu-49. Ser-135 carries the post-translational modification Phosphoserine. Ca(2+)-binding residues include Asp-147, Asp-149, Asp-151, Glu-153, and Glu-158.

Belongs to the centrin family. In terms of assembly, monomer. Component of the TREX-2 complex (transcription and export complex 2), composed of at least ENY2, GANP, PCID2, SEM1, and either centrin CETN2 or CETN3. Interacts with USP49.

It is found in the cytoplasm. The protein localises to the cytoskeleton. The protein resides in the microtubule organizing center. It localises to the centrosome. Its subcellular location is the nucleus. It is found in the nucleolus. The protein localises to the nucleus envelope. The protein resides in the nuclear pore complex. It localises to the centriole. Functionally, plays a fundamental role in microtubule-organizing center structure and function. Its function is as follows. As a component of the TREX-2 complex, involved in the export of mRNAs to the cytoplasm through the nuclear pores. This is Centrin-3 (Cetn3) from Mus musculus (Mouse).